The chain runs to 158 residues: Crossover junction endodeoxyribonuclease RuvC (158 aa).

Residues D7, E66, and D139 contribute to the active site. Mg(2+)-binding residues include D7, E66, and D139.

This sequence belongs to the RuvC family. In terms of assembly, homodimer which binds Holliday junction (HJ) DNA. The HJ becomes 2-fold symmetrical on binding to RuvC with unstacked arms; it has a different conformation from HJ DNA in complex with RuvA. In the full resolvosome a probable DNA-RuvA(4)-RuvB(12)-RuvC(2) complex forms which resolves the HJ. It depends on Mg(2+) as a cofactor.

Its subcellular location is the cytoplasm. It carries out the reaction Endonucleolytic cleavage at a junction such as a reciprocal single-stranded crossover between two homologous DNA duplexes (Holliday junction).. Functionally, the RuvA-RuvB-RuvC complex processes Holliday junction (HJ) DNA during genetic recombination and DNA repair. Endonuclease that resolves HJ intermediates. Cleaves cruciform DNA by making single-stranded nicks across the HJ at symmetrical positions within the homologous arms, yielding a 5'-phosphate and a 3'-hydroxyl group; requires a central core of homology in the junction. The consensus cleavage sequence is 5'-(A/T)TT(C/G)-3'. Cleavage occurs on the 3'-side of the TT dinucleotide at the point of strand exchange. HJ branch migration catalyzed by RuvA-RuvB allows RuvC to scan DNA until it finds its consensus sequence, where it cleaves and resolves the cruciform DNA. The chain is Crossover junction endodeoxyribonuclease RuvC from Campylobacter jejuni subsp. jejuni serotype O:6 (strain 81116 / NCTC 11828).